We begin with the raw amino-acid sequence, 342 residues long: Pre-mRNA-splicing factor 18 (342 aa).

Position 1 is an N-acetylmethionine (Met1).

This sequence belongs to the PRP18 family. Heterodimer with PPIH. Interacts with PRPF4 and with the spliceosome. Part of a complex containing U4/U6 snRNPs.

The protein resides in the nucleus speckle. Participates in the second step of pre-mRNA splicing. This Bos taurus (Bovine) protein is Pre-mRNA-splicing factor 18 (PRPF18).